Here is a 198-residue protein sequence, read N- to C-terminus: Transcription factor BHLH133 (198 aa).

The interval 114-127 is basic motif; degenerate; that stretch reads SAESSQSYYAKNRR. The bHLH domain occupies 114-163; the sequence is SAESSQSYYAKNRRQRINERLRILQELIPNGTKVDISTMLEEAIQYVKFL. The interval 128-163 is helix-loop-helix motif; it reads QRINERLRILQELIPNGTKVDISTMLEEAIQYVKFL.

This sequence belongs to the bHLH protein family.

The protein resides in the nucleus. Functionally, transcription factor that acts as a regulator of iron homeostasis. May act as negative regulator of iron transportation from root to shoot. Does not seem to be involved in the suppression of the induction of iron deficiency responsive genes. In Oryza sativa subsp. japonica (Rice), this protein is Transcription factor BHLH133.